Reading from the N-terminus, the 247-residue chain is Probable transcriptional regulatory protein PMT_1423 (247 aa).

Belongs to the TACO1 family.

Its subcellular location is the cytoplasm. The chain is Probable transcriptional regulatory protein PMT_1423 from Prochlorococcus marinus (strain MIT 9313).